The following is a 295-amino-acid chain: Thioredoxin-related transmembrane protein 2 (295 aa).

The N-terminal stretch at 1–48 (MAVLAPLIALVYSVPRLSRWLARPYCLLSALLSIAFLLVRKLPPICNG) is a signal peptide. Over 49–102 (LPTQREDGNPCDFDWREVEILMFLSAIVMMKNRRSITVEQHVGNIFMFSKVANA) the chain is Extracellular. Residues 103–125 (ILFFRLDIRMGLLYLTLCIVFLM) traverse the membrane as a helical segment. The 156-residue stretch at 114-269 (LLYLTLCIVF…LYQRAKKLSK (156 aa)) folds into the Thioredoxin domain. Residues 126–295 (TCKPPLYMGP…VPDGENKKDK (170 aa)) lie on the Cytoplasmic side of the membrane. 2 positions are modified to phosphoserine: S211 and S243. The disordered stretch occupies residues 266-295 (KLSKGGDMSEEKPGNPTPTAVPDGENKKDK). The Di-lysine motif signature appears at 292–295 (KKDK).

In terms of assembly, monomer. Homodimer; disulfide-linked. Occurs in both reduced and oxidized monomeric form. Oxidative conditions increase homodimerization. Interacts with CANX. Interacts with ATP2A2.

It is found in the endoplasmic reticulum membrane. It localises to the mitochondrion membrane. Its function is as follows. Endoplasmic reticulum and mitochondria-associated protein that probably functions as a regulator of cellular redox state and thereby regulates protein post-translational modification, protein folding and mitochondrial activity. Indirectly regulates neuronal proliferation, migration, and organization in the developing brain. This is Thioredoxin-related transmembrane protein 2 (Tmx2) from Rattus norvegicus (Rat).